Reading from the N-terminus, the 125-residue chain is MRHYEVVFIVHPDQSEQVPAMVERYQTLVTGQGGAVHRLEDWGRRQLAYPIQKLVKAHYVCMNIECGQATLDELEHSFRYNDAVLRHLVIKTKKAQTSPSIMMKSVEREEARKASTEASAPAQAQ.

The tract at residues 99–125 (PSIMMKSVEREEARKASTEASAPAQAQ) is disordered. Residues 105–115 (SVEREEARKAS) show a composition bias toward basic and acidic residues. The span at 116-125 (TEASAPAQAQ) shows a compositional bias: polar residues.

Belongs to the bacterial ribosomal protein bS6 family.

Its function is as follows. Binds together with bS18 to 16S ribosomal RNA. This is Small ribosomal subunit protein bS6 from Bordetella petrii (strain ATCC BAA-461 / DSM 12804 / CCUG 43448).